The chain runs to 453 residues: Bifunctional protein GlmU (453 aa).

Residues 1 to 226 (MFAIAILAAG…IDEVSGVNDR (226 aa)) are pyrophosphorylase. UDP-N-acetyl-alpha-D-glucosamine contacts are provided by residues 7-10 (LAAG), Lys-21, Gln-73, and 78-79 (GT). Residue Asp-103 coordinates Mg(2+). The UDP-N-acetyl-alpha-D-glucosamine site is built by Gly-140, Glu-155, Asn-170, and Asn-224. Residue Asn-224 coordinates Mg(2+). A linker region spans residues 227–247 (AQLANCENLIQQSLRNHWMSK). Residues 248-453 (GVSFIDPESC…NWKTREETNQ (206 aa)) are N-acetyltransferase. UDP-N-acetyl-alpha-D-glucosamine-binding residues include Arg-329 and Lys-347. The active-site Proton acceptor is His-359. UDP-N-acetyl-alpha-D-glucosamine contacts are provided by Tyr-362 and Asn-373. Acetyl-CoA is bound by residues Ala-376, Ala-419, and Arg-436.

It in the N-terminal section; belongs to the N-acetylglucosamine-1-phosphate uridyltransferase family. This sequence in the C-terminal section; belongs to the transferase hexapeptide repeat family. Homotrimer. Requires Mg(2+) as cofactor.

The protein resides in the cytoplasm. The enzyme catalyses alpha-D-glucosamine 1-phosphate + acetyl-CoA = N-acetyl-alpha-D-glucosamine 1-phosphate + CoA + H(+). The catalysed reaction is N-acetyl-alpha-D-glucosamine 1-phosphate + UTP + H(+) = UDP-N-acetyl-alpha-D-glucosamine + diphosphate. Its pathway is nucleotide-sugar biosynthesis; UDP-N-acetyl-alpha-D-glucosamine biosynthesis; N-acetyl-alpha-D-glucosamine 1-phosphate from alpha-D-glucosamine 6-phosphate (route II): step 2/2. It participates in nucleotide-sugar biosynthesis; UDP-N-acetyl-alpha-D-glucosamine biosynthesis; UDP-N-acetyl-alpha-D-glucosamine from N-acetyl-alpha-D-glucosamine 1-phosphate: step 1/1. It functions in the pathway bacterial outer membrane biogenesis; LPS lipid A biosynthesis. Functionally, catalyzes the last two sequential reactions in the de novo biosynthetic pathway for UDP-N-acetylglucosamine (UDP-GlcNAc). The C-terminal domain catalyzes the transfer of acetyl group from acetyl coenzyme A to glucosamine-1-phosphate (GlcN-1-P) to produce N-acetylglucosamine-1-phosphate (GlcNAc-1-P), which is converted into UDP-GlcNAc by the transfer of uridine 5-monophosphate (from uridine 5-triphosphate), a reaction catalyzed by the N-terminal domain. In Prochlorococcus marinus (strain MIT 9211), this protein is Bifunctional protein GlmU.